The sequence spans 238 residues: Orotidine 5'-phosphate decarboxylase (238 aa).

Residues D10, K32, 59–68 (DLKLHDIPNT), T122, R184, Q193, G213, and R214 contribute to the substrate site. The active-site Proton donor is K61.

This sequence belongs to the OMP decarboxylase family. Type 1 subfamily. As to quaternary structure, homodimer.

It catalyses the reaction orotidine 5'-phosphate + H(+) = UMP + CO2. The protein operates within pyrimidine metabolism; UMP biosynthesis via de novo pathway; UMP from orotate: step 2/2. In terms of biological role, catalyzes the decarboxylation of orotidine 5'-monophosphate (OMP) to uridine 5'-monophosphate (UMP). This Bacillus cereus (strain AH820) protein is Orotidine 5'-phosphate decarboxylase.